We begin with the raw amino-acid sequence, 526 residues long: Protein spinster homolog 1 (526 aa).

Residues 1–44 (MTSRRSHGDVTPFLTQADNTEEEGVRDPESQSSDEEEEEGKDHG) are disordered. A run of 12 helical transmembrane segments spans residues 59-79 (VIIVIILFYINLLNYMDRFTV), 98-118 (GLVQTVFICSYMFLAPVFGYL), 126-146 (LIMCVGISFWSLVTLLSSFVS), 159-179 (LVGVGEASYSTIAPTIIADLF), 187-207 (MLSFFYFATPVGCGLGYIVGS), 218-238 (WALRVTPGLGLLAVLLLIFVA), 272-292 (FILSTFGFTTVAFVTGALALW), 321-341 (MIFGGITCITGILGVLTGVEI), 355-375 (LVCAVGMISSAPFLFLSLAFA), 384-404 (VFIFIGETLLSLNWALVADIL), 419-439 (LQIVVSHLLGDAGSPYLIGVI), and 463-483 (MICAFVGVIGGGFFLTTALFI).

The protein belongs to the major facilitator superfamily. Spinster (TC 2.A.1.49) family.

The protein localises to the lysosome membrane. It catalyses the reaction a 1-acyl-sn-glycero-3-phosphocholine(out) + H(+)(out) = a 1-acyl-sn-glycero-3-phosphocholine(in) + H(+)(in). The enzyme catalyses a 1-acyl-sn-glycero-3-phosphoethanolamine(out) + H(+)(out) = a 1-acyl-sn-glycero-3-phosphoethanolamine(in) + H(+)(in). It carries out the reaction a 1-O-(1Z-alkenyl)-sn-glycero-3-phosphocholine(out) + H(+)(out) = a 1-O-(1Z-alkenyl)-sn-glycero-3-phosphocholine(in) + H(+)(in). The catalysed reaction is a 1-O-(1Z-alkenyl)-sn-glycero-3-phosphoethanolamine(out) + H(+)(out) = a 1-O-(1Z-alkenyl)-sn-glycero-3-phosphoethanolamine(in) + H(+)(in). Functionally, mediates the rate-limiting, proton-dependent, lysosomal efflux of lysophospholipids. Selective for zwitterionic headgroups such as lysophosphatidylcholine (LPC) and lysophosphatidylethanolamine (LPE). Essential player in lysosomal homeostasis. The sequence is that of Protein spinster homolog 1 (spns1) from Xenopus laevis (African clawed frog).